The sequence spans 244 residues: Phosphonates import ATP-binding protein PhnC (244 aa).

The 239-residue stretch at 6-244 (IECHNLETAY…LQAQFVVNSQ (239 aa)) folds into the ABC transporter domain. Position 41 to 48 (41 to 48 (GLNGAGKS)) interacts with ATP.

The protein belongs to the ABC transporter superfamily. Phosphonates importer (TC 3.A.1.9.1) family. As to quaternary structure, the complex is composed of two ATP-binding proteins (PhnC), two transmembrane proteins (PhnE) and a solute-binding protein (PhnD).

It localises to the cell inner membrane. It carries out the reaction phosphonate(out) + ATP + H2O = phosphonate(in) + ADP + phosphate + H(+). Functionally, part of the ABC transporter complex PhnCDE involved in phosphonates import. Responsible for energy coupling to the transport system. The polypeptide is Phosphonates import ATP-binding protein PhnC (Trichormus variabilis (strain ATCC 29413 / PCC 7937) (Anabaena variabilis)).